We begin with the raw amino-acid sequence, 305 residues long: Tyrosine recombinase XerC (305 aa).

The 87-residue stretch at 2 to 88 folds into the Core-binding (CB) domain; that stretch reads TNKQRLVHLF…ALRSFYKFLL (87 aa). A Tyr recombinase domain is found at 109 to 295; that stretch reads RIPSFLYEEE…SKDSLRKTYM (187 aa). Residues Arg149, Lys173, His247, Arg250, and His273 contribute to the active site. Tyr282 (O-(3'-phospho-DNA)-tyrosine intermediate) is an active-site residue.

It belongs to the 'phage' integrase family. XerC subfamily. Forms a cyclic heterotetrameric complex composed of two molecules of XerC and two molecules of XerD.

It is found in the cytoplasm. Site-specific tyrosine recombinase, which acts by catalyzing the cutting and rejoining of the recombining DNA molecules. The XerC-XerD complex is essential to convert dimers of the bacterial chromosome into monomers to permit their segregation at cell division. It also contributes to the segregational stability of plasmids. In Bacillus pumilus (strain SAFR-032), this protein is Tyrosine recombinase XerC.